Consider the following 278-residue polypeptide: Hydroxyethylthiazole kinase (278 aa).

Position 48 (methionine 48) interacts with substrate. The ATP site is built by arginine 124 and threonine 175. Substrate is bound at residue glycine 202.

It belongs to the Thz kinase family. Requires Mg(2+) as cofactor.

It carries out the reaction 5-(2-hydroxyethyl)-4-methylthiazole + ATP = 4-methyl-5-(2-phosphooxyethyl)-thiazole + ADP + H(+). The protein operates within cofactor biosynthesis; thiamine diphosphate biosynthesis; 4-methyl-5-(2-phosphoethyl)-thiazole from 5-(2-hydroxyethyl)-4-methylthiazole: step 1/1. Its function is as follows. Catalyzes the phosphorylation of the hydroxyl group of 4-methyl-5-beta-hydroxyethylthiazole (THZ). The polypeptide is Hydroxyethylthiazole kinase (Clostridium botulinum (strain Eklund 17B / Type B)).